The chain runs to 294 residues: Bifunctional protein FolD (294 aa).

Residues 171–173, S196, and I237 each bind NADP(+); that span reads GRS.

The protein belongs to the tetrahydrofolate dehydrogenase/cyclohydrolase family. Homodimer.

The catalysed reaction is (6R)-5,10-methylene-5,6,7,8-tetrahydrofolate + NADP(+) = (6R)-5,10-methenyltetrahydrofolate + NADPH. It carries out the reaction (6R)-5,10-methenyltetrahydrofolate + H2O = (6R)-10-formyltetrahydrofolate + H(+). It functions in the pathway one-carbon metabolism; tetrahydrofolate interconversion. Functionally, catalyzes the oxidation of 5,10-methylenetetrahydrofolate to 5,10-methenyltetrahydrofolate and then the hydrolysis of 5,10-methenyltetrahydrofolate to 10-formyltetrahydrofolate. The chain is Bifunctional protein FolD from Synechocystis sp. (strain ATCC 27184 / PCC 6803 / Kazusa).